An 83-amino-acid polypeptide reads, in one-letter code: Bublin coiled-coil protein (83 aa).

The segment at 1–25 (MSGPNGDLGTPVEAGAEGEEDGFGE) is disordered. Positions 25–74 (EAEYAAINSMLDQINSCLDHLEEKNDHLHARLQELLESNRQTRLEFQQQL) form a coiled coil. At Ser-82 the chain carries Phosphoserine.

Belongs to the UPF0184 (EST00098) family.

The protein localises to the cell junction. It is found in the cytoplasm. Its subcellular location is the cytoskeleton. Essential for intermediate filament organization in intestinal cells, interacts with intermediate filament and regulates intestinal lumen morphology. This is Bublin coiled-coil protein (BBLN) from Bos taurus (Bovine).